The sequence spans 119 residues: Large ribosomal subunit protein uL22 (119 aa).

It belongs to the universal ribosomal protein uL22 family. Part of the 50S ribosomal subunit.

Functionally, this protein binds specifically to 23S rRNA; its binding is stimulated by other ribosomal proteins, e.g. L4, L17, and L20. It is important during the early stages of 50S assembly. It makes multiple contacts with different domains of the 23S rRNA in the assembled 50S subunit and ribosome. The globular domain of the protein is located near the polypeptide exit tunnel on the outside of the subunit, while an extended beta-hairpin is found that lines the wall of the exit tunnel in the center of the 70S ribosome. The protein is Large ribosomal subunit protein uL22 of Tropheryma whipplei (strain TW08/27) (Whipple's bacillus).